Reading from the N-terminus, the 1578-residue chain is MTPQPLEQGGAVASFIPTGQEMAQRQNLIPLGRLIDFIIQRTYHELTVLAELLPRKTDMERKIEIYNFSASTRQLFIRLLALVKWANSASKVDKSAKIMAFLDKQSLLFMDTADMLSRMARETLVNARLPNFHIPAAVEILTTGTYSRLPSIIRERIVPPDPITTLEKRQTLQRLNQVIQHRLVTGNLLPQLRKFKIENGRVTFKVDHEFEVSLTVMGDGPNIPWRLLDIDILVEDKETGDGKALVHTLQVNYIHQLIQGRIVDSPDALAEVYNCLHYFCQSLQLEVLYTQTLRLMRDRLDDHIHVDEYIPGTKLTVSYWRELTNKDPKSELGYRLMIQTDQSDTTKQLAILHLPSIGTKEVDIADRAVRSELLSMERLLVHTVYVRSLARLGDLKTELQLFLKDVDYSIQGTPAMLLVPVLNPCLRAEHIYITVDTHTGMLRCHVPKHLDCPIMPELQHALNNDRSKLQHLFSELRYWITQRRCEKTLQHLPATTQERLPLVFPADHPIEKIGPHRVYIQMCRHANVILIVELKEKESSPNEMTYTFYLVLVKPSSMEDSQSVTAGGTSQSSAPSAATTESDGMPKMYLKVLSLIEFDTFVATHGPGTYVDEQTVGSKRKLLTGEGPSAKQSKTIYPAYFIPELAHVVAMCDEKLPFVALAKDLTRRKIPHGGVQVEANATSLVLKLLTLPQPKPPVIPVSSSAAAAAAAQSGPDQKPPEPKVVSVPKIDKDVWNALLKRLLSVSVRAQINKSIQTRMWTVELVFYGTPLASAHHKEQGMRRAVYLTYDMLPVDSVDKFVDMILNDWSKIVYLYTLVHDFREQIKNDKYNLHNIVTIKSYSYTSLLLAYGPNKEVNVNIYWDTEAKEFKMVFTGGNNAINAHSMMRDQLQAHLNHNYDLAQIVYLLHETYQPLSSIAKLPIIPHLAILQSPKIPVLSFCIIPQSPTLLRISFQGVYCLEVRLRGSGLCSIRDGAYSRFDRSHVVEEFTPTQGLKGFLSKYVDETAVYRRRSQSEDDNPPSPITMEDPHGGPASVGSTFLSGGAMRGPQSPRDPGLRFAAPLTPPSGSNPHTPASPHPQGIGGSQSHPNFNMTSPPAPHMPHPSPSGGLMPSSPLNPQPSPMAAHSPGPTNLPYMSGHTDSPFSAHSPAASNWPGSPGMPRPSPRPGQSPDHKAQKRLLIISLKFTAPHHNTSRVLPARSWAGAIPTLLTHEALDTLCRATIHPQKEIPGPELSPLERFLGSVFMRRQLQRIIHQEDNLTAITSNEPGVVLFKADNLQYQVFLNPNHMQSLHMKVSQAPMAPTMDGKPPYQWPPEDLQILEQFFDQRVAAPPYRPAVVTSFTRMLNLPSQVMKDFIQIMRLDLIPELGQGNKWNVQFILRMPPSATPIVPVGTTTILSHRQKILFFIQITRVPYLPNMELKDSVTMLLPMVYDMTVNHTQLAERREQIIPQLTSAVSAHLRRFVECTVLQPGECSLFPAVRDLLMNLTLPNEQPPPGQMGNQIGTMGGMAPGGPGGPGPMGGQIAPSPVGGQVVSSPNPMMHSPMQMGGGGQQSNYGGMVGGGAQSGVPGGPGAGGPN.

The LXXLL motif 1 motif lies at 49–53; the sequence is LAELL. The tract at residues 561–582 is disordered; sequence SQSVTAGGTSQSSAPSAATTES. Low complexity predominate over residues 565 to 580; that stretch reads TAGGTSQSSAPSAATT. The LXXLL motif 2 motif lies at 739–743; it reads LKRLL. 2 disordered regions span residues 1009 to 1173 and 1510 to 1578; these read RRRS…PDHK and APGG…GGPN. Positions 1084–1093 are enriched in polar residues; it reads SQSHPNFNMT. 2 stretches are compositionally biased toward pro residues: residues 1095-1104 and 1157-1167; these read PPAPHMPHPS and PGMPRPSPRPG. 2 stretches are compositionally biased toward gly residues: residues 1510–1521 and 1547–1578; these read APGGPGGPGPMG and MGGG…GGPN.

The protein belongs to the Mediator complex subunit 14 family. In terms of assembly, component of the Mediator complex.

Its subcellular location is the nucleus. Component of the Mediator complex, a coactivator involved in the regulated transcription of nearly all RNA polymerase II-dependent genes. Mediator functions as a bridge to convey information from gene-specific regulatory proteins to the basal RNA polymerase II transcription machinery. Mediator is recruited to promoters by direct interactions with regulatory proteins and serves as a scaffold for the assembly of a functional preinitiation complex with RNA polymerase II and the general transcription factors. The chain is Mediator of RNA polymerase II transcription subunit 14 (MED14) from Aedes aegypti (Yellowfever mosquito).